Here is a 707-residue protein sequence, read N- to C-terminus: Drebrin (707 aa).

Residue A2 is modified to N-acetylalanine. The 132-residue stretch at 3-134 (GVSFSGHRLE…DAGAIGQRLS (132 aa)) folds into the ADF-H domain. S141 and S142 each carry phosphoserine. A compositionally biased stretch (basic and acidic residues) spans 209–236 (ERMEQERQEQEERERRYREREQQIEEHR). Disordered stretches follow at residues 209–438 (ERME…VCKE), 452–497 (AEEP…TSVA), 531–557 (WPGN…AEAS), 582–609 (LLNF…PLAA), and 630–707 (LEPE…EGGD). S241 is modified (phosphoserine). Positions 288-298 (DNPREFFRQQE) are enriched in basic and acidic residues. The span at 329–343 (SDSGPSSSSSSSSSP) shows a compositional bias: low complexity. Phosphoserine is present on S342. Positions 355–364 (RTPNLSSSLP) are enriched in polar residues. Phosphothreonine is present on residues T377 and T381. The span at 380-395 (PTRSPSDSSTASTPIT) shows a compositional bias: polar residues. Residues S383, S385, and S391 each carry the phosphoserine modification. A Phosphothreonine modification is found at T392. Residues 409–420 (QPPPPPPPPPPA) show a composition bias toward pro residues. Basic and acidic residues predominate over residues 428 to 438 (PRLDGEEVCKE). Residue S467 is modified to Phosphoserine. A Phosphothreonine modification is found at T549. Residues 639–652 (NGETTQKEGTQQAS) show a composition bias toward polar residues. S659 is subject to Phosphoserine. Residues 695–707 (PVPEEEEGFEGGD) are compositionally biased toward acidic residues.

In terms of assembly, interacts with RUFY. Interacts with CXCR4; this interaction is enhanced by antigenic stimulation. Interacts (via ADF-H domain) with ZMYND8 (via N-terminus); the interaction leads to sequestering of ZMYND8 in the cytoplasm. In terms of processing, ISGylated. In terms of tissue distribution, brain neurons.

The protein localises to the cytoplasm. It is found in the cell projection. The protein resides in the dendrite. It localises to the cell cortex. Its subcellular location is the cell junction. The protein localises to the growth cone. In terms of biological role, actin cytoskeleton-organizing protein that plays a role in the formation of cell projections. Required for actin polymerization at immunological synapses (IS) and for the recruitment of the chemokine receptor CXCR4 to IS. Plays a role in dendritic spine morphogenesis and organization, including the localization of the dopamine receptor DRD1 to the dendritic spines. Involved in memory-related synaptic plasticity in the hippocampus. This Rattus norvegicus (Rat) protein is Drebrin (Dbn1).